Consider the following 906-residue polypeptide: Protein translocase subunit SecA (906 aa).

ATP-binding positions include Gln-90, 108 to 112 (GEGKT), and Asp-503. Positions 845 to 882 (TAAEAPASVPQPQAAVAPQPAPELVGADNGESQPQAWG) are disordered. A compositionally biased stretch (low complexity) spans 846 to 862 (AAEAPASVPQPQAAVAP). Residues Cys-890, Cys-892, Cys-901, and His-902 each contribute to the Zn(2+) site.

The protein belongs to the SecA family. Monomer and homodimer. Part of the essential Sec protein translocation apparatus which comprises SecA, SecYEG and auxiliary proteins SecDF-YajC and YidC. Requires Zn(2+) as cofactor.

The protein localises to the cell inner membrane. Its subcellular location is the cytoplasm. The catalysed reaction is ATP + H2O + cellular proteinSide 1 = ADP + phosphate + cellular proteinSide 2.. Its function is as follows. Part of the Sec protein translocase complex. Interacts with the SecYEG preprotein conducting channel. Has a central role in coupling the hydrolysis of ATP to the transfer of proteins into and across the cell membrane, serving both as a receptor for the preprotein-SecB complex and as an ATP-driven molecular motor driving the stepwise translocation of polypeptide chains across the membrane. In Cereibacter sphaeroides (strain ATCC 17025 / ATH 2.4.3) (Rhodobacter sphaeroides), this protein is Protein translocase subunit SecA.